Reading from the N-terminus, the 136-residue chain is Pilotin AspS 2 (136 aa).

The N-terminal stretch at 1-24 (MSIKQMPGRVLISLLLSVTGLLSG) is a signal peptide. A lipid anchor (N-palmitoyl cysteine) is attached at Cys-25. Cys-25 carries the S-diacylglycerol cysteine lipid modification. An intrachain disulfide couples Cys-94 to Cys-131.

It belongs to the GspS/AspS pilotin family. In terms of assembly, cryo-electron microscopy shows that the complex forms a cylindrical channel with 15 GspD2 subunits, each of which interacts with its surrounding AspS2 (GspS-beta).

The protein localises to the cell outer membrane. Functionally, part of a type II secretion system (T2SS, formerly general secretion pathway, GSP) for the export of folded proteins across the outer membrane. Required for correct assembly of the type II secretion system-beta (T2SS-beta), for localization of GspD-beta to the cell outer membrane and for export of a labile enterotoxin by T2SS-beta. Each AspS2 binds to 2 GspD2 subunits and may clamp the monomers together, stabilizing structure and accelerating its assembly. The polypeptide is Pilotin AspS 2 (Escherichia coli O78:H11 (strain H10407 / ETEC)).